The primary structure comprises 354 residues: Probable butyrate kinase (354 aa).

The protein belongs to the acetokinase family.

The protein resides in the cytoplasm. It carries out the reaction butanoate + ATP = butanoyl phosphate + ADP. The protein is Probable butyrate kinase of Phocaeicola vulgatus (strain ATCC 8482 / DSM 1447 / JCM 5826 / CCUG 4940 / NBRC 14291 / NCTC 11154) (Bacteroides vulgatus).